The primary structure comprises 134 residues: Small ribosomal subunit protein uS9 (134 aa).

A disordered region spans residues 114-134 (EVERKKYGLKKARRAPQFSKR). Over residues 120–134 (YGLKKARRAPQFSKR) the composition is skewed to basic residues.

It belongs to the universal ribosomal protein uS9 family.

This is Small ribosomal subunit protein uS9 from Thermotoga neapolitana (strain ATCC 49049 / DSM 4359 / NBRC 107923 / NS-E).